We begin with the raw amino-acid sequence, 589 residues long: Probable ATP-dependent RNA helicase DDX59 (589 aa).

2 disordered regions span residues 1–36 (MFVPRSLKLKRNSNDDLKSCEAKKSKPEAAGLQLEG) and 48–98 (KEAV…SKTQ). Positions 12–27 (NSNDDLKSCEAKKSKP) are enriched in basic and acidic residues. Lys26 participates in a covalent cross-link: Glycyl lysine isopeptide (Lys-Gly) (interchain with G-Cter in SUMO2). Ser64 carries the phosphoserine modification. A compositionally biased stretch (basic and acidic residues) spans 80 to 91 (GVKDSHPSEEPV). The segment at 104–133 (GEPVCVVCGRYGEYICDKTDEDVCSLECKA) adopts an HIT-type zinc-finger fold. Ser156 and Ser160 each carry phosphoserine. A Q motif motif is present at residues 203–231 (IDFEHCGFPETLNQNLKKSGYEVPTPIQM). The 142-residue stretch at 234 to 375 (IPVGLLGRDI…DQLLHNPVRI (142 aa)) folds into the Helicase ATP-binding domain. 247–254 (ADTGSGKT) contacts ATP. A DEAD box motif is present at residues 323–326 (VKAD). The Helicase C-terminal domain maps to 399–549 (KKKKLFEILN…ILPPQLLNSP (151 aa)).

The protein belongs to the DEAD box helicase family. DDX59 subfamily. In terms of assembly, interacts (via HIT-type zinc finger) with the RUVBL1/RUVBL2 complex in the presence of ADP.

Its subcellular location is the cytoplasm. It is found in the nucleus. The catalysed reaction is ATP + H2O = ADP + phosphate + H(+). This chain is Probable ATP-dependent RNA helicase DDX59 (Ddx59), found in Rattus norvegicus (Rat).